The following is a 507-amino-acid chain: ATP synthase subunit alpha, chloroplastic (507 aa).

170–177 is an ATP binding site; the sequence is GDRQTGKT.

The protein belongs to the ATPase alpha/beta chains family. In terms of assembly, F-type ATPases have 2 components, CF(1) - the catalytic core - and CF(0) - the membrane proton channel. CF(1) has five subunits: alpha(3), beta(3), gamma(1), delta(1), epsilon(1). CF(0) has four main subunits: a, b, b' and c.

It localises to the plastid. Its subcellular location is the chloroplast thylakoid membrane. It carries out the reaction ATP + H2O + 4 H(+)(in) = ADP + phosphate + 5 H(+)(out). Its function is as follows. Produces ATP from ADP in the presence of a proton gradient across the membrane. The alpha chain is a regulatory subunit. The protein is ATP synthase subunit alpha, chloroplastic of Chloranthus spicatus (Chulantree).